The sequence spans 353 residues: uncharacterized protein (353 aa).

Positions 1–20 (MLMRSVCFILLAVLLFSLSA) are cleaved as a signal peptide. Cys-21 carries the N-palmitoyl cysteine lipid modification. A lipid anchor (S-diacylglycerol cysteine) is attached at Cys-21.

The protein localises to the cell membrane. This is an uncharacterized protein from Bacillus subtilis (strain 168).